The sequence spans 297 residues: 4-hydroxy-tetrahydrodipicolinate synthase (297 aa).

Residue Thr-46 participates in pyruvate binding. Tyr-134 acts as the Proton donor/acceptor in catalysis. The active-site Schiff-base intermediate with substrate is Lys-163. Residue Ile-205 coordinates pyruvate.

This sequence belongs to the DapA family. In terms of assembly, homotetramer; dimer of dimers.

The protein resides in the cytoplasm. The enzyme catalyses L-aspartate 4-semialdehyde + pyruvate = (2S,4S)-4-hydroxy-2,3,4,5-tetrahydrodipicolinate + H2O + H(+). The protein operates within amino-acid biosynthesis; L-lysine biosynthesis via DAP pathway; (S)-tetrahydrodipicolinate from L-aspartate: step 3/4. Its function is as follows. Catalyzes the condensation of (S)-aspartate-beta-semialdehyde [(S)-ASA] and pyruvate to 4-hydroxy-tetrahydrodipicolinate (HTPA). In Thermoanaerobacter pseudethanolicus (strain ATCC 33223 / 39E) (Clostridium thermohydrosulfuricum), this protein is 4-hydroxy-tetrahydrodipicolinate synthase.